The primary structure comprises 202 residues: uncharacterized protein (202 aa).

The interval 178–202 (VCSSEDSEADRYSDYGWGGPSSPFN) is disordered.

This is an uncharacterized protein from Homo sapiens (Human).